The following is a 1268-amino-acid chain: uncharacterized protein (1268 aa).

The segment covering 191–206 (KIVSVKPSKSSQQVDV) has biased composition (low complexity). Disordered regions lie at residues 191–235 (KIVS…SKKK) and 253–273 (NCRS…SKGC). Positions 223–235 (RKPEKSSQDSKKK) are enriched in basic and acidic residues. The CCHC-type zinc finger occupies 239–256 (PTCFYCNKKGHYATNCRS). In terms of domain architecture, Reverse transcriptase spans 465-644 (EMGVIVPITY…KQVTFLGFVD (180 aa)). An Integrase catalytic domain is found at 844-997 (VPEAPWKRIH…TPAECHFGRK (154 aa)). The interval 1092 to 1268 (GDYSRSSVNP…RRERVRTTWR (177 aa)) is disordered. Polar residues-rich tracts occupy residues 1127–1143 (VTSN…SRIT) and 1160–1169 (GSCSPTNNDV). A compositionally biased stretch (low complexity) spans 1208-1221 (PSTSTGTPRGSTST). Residues 1222-1249 (QLGQASTRNGSRYTASGRNPSCQGNRYS) are compositionally biased toward polar residues. The span at 1257–1268 (TARRERVRTTWR) shows a compositional bias: basic and acidic residues.

This is an uncharacterized protein from Caenorhabditis elegans.